A 338-amino-acid chain; its full sequence is Tripartite motif-containing protein 44 (338 aa).

2 disordered regions span residues 1 to 25 (MASG…EPDE) and 72 to 162 (ARGD…EFDP). Positions 95–162 (EAGEGIESEE…ETEAESEFDP (68 aa)) are enriched in acidic residues. Positions 109–153 (EEESETEEESEDESEEDSEEEMEDEQESEAEEDNQEEGESEAEGE) form a coiled coil. Residues 171–212 (VAKRKCPDHGLDLSTYCQEDKQLICVLCPVIGAHHGHHLSTL) form a B box-type zinc finger. Zn(2+) contacts are provided by cysteine 176, histidine 179, cysteine 198, and histidine 204. Positions 257 to 322 (QQEFKKVQKV…QLDTSNESAE (66 aa)) form a coiled coil. The segment at 307–338 (MAQAKEQLDTSNESAEPKAEGDEEEPGGTDED) is disordered. The span at 327 to 338 (GDEEEPGGTDED) shows a compositional bias: acidic residues.

Interacts (via coiled coil) with TRIM17 (via coiled coil).

In terms of biological role, may play a role in the process of differentiation and maturation of neuronal cells. May regulate the activity of TRIM17. Is a negative regulator of PAX6 expression. The protein is Tripartite motif-containing protein 44 (TRIM44) of Bos taurus (Bovine).